The chain runs to 307 residues: Glutathione synthetase (307 aa).

The region spanning 120 to 304 (KLGALRFSRW…LADQTIERLR (185 aa)) is the ATP-grasp domain. 146-202 (AREQGDVVLKPLGGRAGLGVIRVQAEAPGLKALLELVTEQERLPVMAQRFLPDVTEG) contacts ATP. Mg(2+) is bound by residues E275 and N277.

It belongs to the prokaryotic GSH synthase family. Requires Mg(2+) as cofactor. It depends on Mn(2+) as a cofactor.

The catalysed reaction is gamma-L-glutamyl-L-cysteine + glycine + ATP = glutathione + ADP + phosphate + H(+). Its pathway is sulfur metabolism; glutathione biosynthesis; glutathione from L-cysteine and L-glutamate: step 2/2. The sequence is that of Glutathione synthetase from Parasynechococcus marenigrum (strain WH8102).